A 327-amino-acid chain; its full sequence is 7,8-didemethyl-8-hydroxy-5-deazariboflavin synthase (327 aa).

Residues I6–N244 enclose the Radical SAM core domain. [4Fe-4S] cluster is bound by residues C20, C24, and C27.

This sequence belongs to the radical SAM superfamily. CofG family. As to quaternary structure, consists of two subunits, CofG and CofH. [4Fe-4S] cluster is required as a cofactor.

The enzyme catalyses 5-amino-5-(4-hydroxybenzyl)-6-(D-ribitylimino)-5,6-dihydrouracil + S-adenosyl-L-methionine = 7,8-didemethyl-8-hydroxy-5-deazariboflavin + 5'-deoxyadenosine + L-methionine + NH4(+) + H(+). The protein operates within cofactor biosynthesis; coenzyme F0 biosynthesis. Its function is as follows. Catalyzes the radical-mediated synthesis of 7,8-didemethyl-8-hydroxy-5-deazariboflavin from 5-amino-5-(4-hydroxybenzyl)-6-(D-ribitylimino)-5,6-dihydrouracil. In Methanosphaerula palustris (strain ATCC BAA-1556 / DSM 19958 / E1-9c), this protein is 7,8-didemethyl-8-hydroxy-5-deazariboflavin synthase.